Consider the following 149-residue polypeptide: Calmodulin-3 (149 aa).

Residue Ala2 is modified to N-acetylalanine. 4 EF-hand domains span residues 8 to 43 (DQIA…LGQN), 44 to 79 (PTEA…KMKD), 81 to 116 (DSEE…LGEK), and 117 to 149 (LTDE…MMAK). Ca(2+)-binding residues include Asp21, Asp23, Asp25, Cys27, Glu32, Asp57, Asp59, Asn61, Thr63, Glu68, Asp94, Asp96, Asn98, and Glu105. Residue Lys116 is modified to N6,N6,N6-trimethyllysine. Positions 130, 132, 134, 136, and 141 each coordinate Ca(2+).

It belongs to the calmodulin family.

Its function is as follows. Calmodulin mediates the control of a large number of enzymes, ion channels and other proteins by Ca(2+). Among the enzymes to be stimulated by the calmodulin-Ca(2+) complex are a number of protein kinases and phosphatases. This Oryza sativa subsp. japonica (Rice) protein is Calmodulin-3 (CAM3).